We begin with the raw amino-acid sequence, 560 residues long: MPSSSPSMDESRRSAVPPKEPAGRICTVCSDRANGYNFGVLTCESCKAFFRRNASKHKEIKCPFSDSCQITSASRKFCQACRLNKCFAVGMNSEWLNDLKPKSSIVSGKFKRKKPDMKNNLKVEVDDTEEDLENDDEEQISVPKALLEKLINKANEKSKDRCTCKCQCGFYPITQRLTAYEPKDTTAVNSPQDISFSHHLHHSDSFYSSSTSTLSPMSVISCAPSSHDSSGYNTSQLVTQSPTNYTVSPASIPSSITELSPQMPSQYPPMLSPFQFGVMAQMAAPANFLNFPPMPERTWTPIQAVSTVPVTETLPPNLLEQIHSKIDKYIGVLNEDEITLLEELHVQNEPLNAPLIQWHNPKSIDGVFRIIEEALRRIVNMACQLSLFRELHVDDRKNLLKSGFGELLIVRGLMAYDKSDNSWNHSFGVRGKMEVKVEVLKNPKLEEHYKAHMNLLSTFGEDVRNNEHLMLIFNAAVIFHPHVSNLRDSKRVHSTQAKYFQMLLKLLTFEYGKSRADIAYSNLLNQVVELHRVNRTLLRVFYGLDIAQLDPLIRELCSFE.

The segment at 1 to 21 (MPSSSPSMDESRRSAVPPKEP) is disordered. The segment at residues 23–98 (GRICTVCSDR…VGMNSEWLND (76 aa)) is a DNA-binding region (nuclear receptor). NR C4-type zinc fingers lie at residues 26–46 (CTVC…CESC) and 62–86 (CPFS…LNKC). The 225-residue stretch at 336 to 560 (DEITLLEELH…PLIRELCSFE (225 aa)) folds into the NR LBD domain.

It belongs to the nuclear hormone receptor family.

It localises to the nucleus. In terms of biological role, orphan nuclear receptor. In Caenorhabditis elegans, this protein is Nuclear hormone receptor family member nhr-8 (nhr-8).